Consider the following 841-residue polypeptide: pre-rRNA 2'-O-ribose RNA methyltransferase FTSJ3 (841 aa).

S-adenosyl-L-methionine is bound by residues G56, W58, D76, D92, and D117. The active-site Proton acceptor is the K157. Residues 332 to 366 (ISLSSGEEDEGNEEDSTAGTTEQPSKEEEEEEQLN) form a disordered region. S333, S335, S336, S347, and S356 each carry phosphoserine. Residues 337–347 (GEEDEGNEEDS) are compositionally biased toward acidic residues. A coiled-coil region spans residues 356–404 (SKEEEEEEQLNQTLAEMKAQEVAELKRKKKKLLREQRKQRERVELKMDL). K357 participates in a covalent cross-link: Glycyl lysine isopeptide (Lys-Gly) (interchain with G-Cter in SUMO2). R389 carries the citrulline modification. The disordered stretch occupies residues 454–482 (VSDVEDDGDDTSLDSDLDPEELAGVRGHQ). Positions 456-474 (DVEDDGDDTSLDSDLDPEE) are enriched in acidic residues. S547 is subject to Phosphoserine. T567 carries the post-translational modification Phosphothreonine. K573 participates in a covalent cross-link: Glycyl lysine isopeptide (Lys-Gly) (interchain with G-Cter in SUMO2). Phosphoserine is present on S578. Positions 579 to 654 (PLYQDEAPKG…IVPIEDPAKH (76 aa)) are disordered. A Glycyl lysine isopeptide (Lys-Gly) (interchain with G-Cter in SUMO2) cross-link involves residue K637. Residue S638 is modified to Phosphoserine. A Glycyl lysine isopeptide (Lys-Gly) (interchain with G-Cter in SUMO2) cross-link involves residue K653. Position 670 is a phosphoserine (S670). K672 is covalently cross-linked (Glycyl lysine isopeptide (Lys-Gly) (interchain with G-Cter in SUMO2)). S682 is subject to Phosphoserine. A Glycyl lysine isopeptide (Lys-Gly) (interchain with G-Cter in SUMO2) cross-link involves residue K704. Residues 733-771 (IKKVAEAKARKKRRMLKRLEQTRKKAEAVVNTVDISERE) are a coiled coil. The residue at position 777 (R777) is a Citrulline. The segment covering 805–815 (VRRPAGVRGHF) has biased composition (basic residues). Residues 805 to 841 (VRRPAGVRGHFKVVDSRMKKDQRAQQRKEQKKKHKRK) form a disordered region. A compositionally biased stretch (basic and acidic residues) spans 816–832 (KVVDSRMKKDQRAQQRK).

It belongs to the class I-like SAM-binding methyltransferase superfamily. RNA methyltransferase RlmE family. SPB1 subfamily. As to quaternary structure, interacts with NIP7. Post-translationally, citrullinated by PADI4.

It localises to the nucleus. It is found in the nucleolus. It catalyses the reaction a ribonucleotide in rRNA + S-adenosyl-L-methionine = a 2'-O-methylribonucleotide in rRNA + S-adenosyl-L-homocysteine + H(+). RNA 2'-O-methyltransferase involved in the processing of the 34S pre-rRNA to 18S rRNA and in 40S ribosomal subunit formation. The protein is pre-rRNA 2'-O-ribose RNA methyltransferase FTSJ3 of Pongo abelii (Sumatran orangutan).